An 896-amino-acid polypeptide reads, in one-letter code: Translation initiation factor IF-2 (896 aa).

Disordered stretches follow at residues 32–99 and 117–304; these read LAQA…TALP and EITS…KQAE. Over residues 35–48 the composition is skewed to polar residues; sequence AGSSDTKNSPASKA. Basic and acidic residues predominate over residues 153–169; sequence TPERIEETPIIRTRTEP. Low complexity predominate over residues 203-214; it reads AASTEETTQQQP. Residues 215–227 are compositionally biased toward polar residues; it reads RQNDAASHNNKQQ. A compositionally biased stretch (low complexity) spans 228-241; it reads PSGTSSRPASSAPS. The segment covering 256–280 has biased composition (basic and acidic residues); that stretch reads RGSERDRSKRSDESVKAFTGRDRYG. A tr-type G domain is found at 401–570; sequence IRSPIVAFMG…ALQAEVLELK (170 aa). A G1 region spans residues 410–417; sequence GHVDHGKT. 410 to 417 provides a ligand contact to GTP; the sequence is GHVDHGKT. Positions 435-439 are G2; the sequence is AITQH. A G3 region spans residues 456-459; the sequence is DTPG. GTP contacts are provided by residues 456 to 460 and 510 to 513; these read DTPGH and NKCD. The segment at 510-513 is G4; it reads NKCD. The segment at 546–548 is G5; it reads SAK.

Belongs to the TRAFAC class translation factor GTPase superfamily. Classic translation factor GTPase family. IF-2 subfamily.

The protein resides in the cytoplasm. Functionally, one of the essential components for the initiation of protein synthesis. Protects formylmethionyl-tRNA from spontaneous hydrolysis and promotes its binding to the 30S ribosomal subunits. Also involved in the hydrolysis of GTP during the formation of the 70S ribosomal complex. This chain is Translation initiation factor IF-2, found in Chlamydia trachomatis serovar L2 (strain ATCC VR-902B / DSM 19102 / 434/Bu).